The following is a 364-amino-acid chain: Alanine racemase (364 aa).

K35 functions as the Proton acceptor; specific for D-alanine in the catalytic mechanism. At K35 the chain carries N6-(pyridoxal phosphate)lysine. Residue R131 coordinates substrate. Catalysis depends on Y256, which acts as the Proton acceptor; specific for L-alanine. Substrate is bound at residue M304.

The protein belongs to the alanine racemase family. Requires pyridoxal 5'-phosphate as cofactor.

It carries out the reaction L-alanine = D-alanine. Its pathway is amino-acid biosynthesis; D-alanine biosynthesis; D-alanine from L-alanine: step 1/1. Catalyzes the interconversion of L-alanine and D-alanine. May also act on other amino acids. The polypeptide is Alanine racemase (alr) (Chromohalobacter salexigens (strain ATCC BAA-138 / DSM 3043 / CIP 106854 / NCIMB 13768 / 1H11)).